We begin with the raw amino-acid sequence, 94 residues long: Acylphosphatase (94 aa).

Positions 6–92 constitute an Acylphosphatase-like domain; the sequence is RVHVWIRGRV…EGLPTFEIRP (87 aa). Catalysis depends on residues R21 and N39.

Belongs to the acylphosphatase family.

The catalysed reaction is an acyl phosphate + H2O = a carboxylate + phosphate + H(+). The polypeptide is Acylphosphatase (acyP) (Synechococcus sp. (strain JA-2-3B'a(2-13)) (Cyanobacteria bacterium Yellowstone B-Prime)).